Consider the following 369-residue polypeptide: Molybdenum import ATP-binding protein ModC (369 aa).

Residues 3 to 246 (TRPEQASKDT…LDLPLAHGDS (244 aa)) enclose the ABC transporter domain. 44-51 (GPSGSGKT) contributes to the ATP binding site. Positions 305–369 (DTSILNILPA…AQIKGVAILG (65 aa)) constitute a Mop domain.

The protein belongs to the ABC transporter superfamily. Molybdate importer (TC 3.A.1.8) family. The complex is composed of two ATP-binding proteins (ModC), two transmembrane proteins (ModB) and a solute-binding protein (ModA).

The protein resides in the cell inner membrane. The catalysed reaction is molybdate(out) + ATP + H2O = molybdate(in) + ADP + phosphate + H(+). Its function is as follows. Part of the ABC transporter complex ModABC involved in molybdenum import. Responsible for energy coupling to the transport system. The protein is Molybdenum import ATP-binding protein ModC of Albidiferax ferrireducens (strain ATCC BAA-621 / DSM 15236 / T118) (Rhodoferax ferrireducens).